The following is a 294-amino-acid chain: Phosphonoacetaldehyde hydrolase (294 aa).

Catalysis depends on D19, which acts as the Nucleophile. Mg(2+)-binding residues include D19 and A21. Catalysis depends on K60, which acts as the Schiff-base intermediate with substrate. D193 contacts Mg(2+).

It belongs to the HAD-like hydrolase superfamily. PhnX family. Homodimer. Mg(2+) serves as cofactor.

It catalyses the reaction phosphonoacetaldehyde + H2O = acetaldehyde + phosphate + H(+). Involved in phosphonate degradation. The polypeptide is Phosphonoacetaldehyde hydrolase (Hahella chejuensis (strain KCTC 2396)).